The chain runs to 207 residues: Outer-membrane lipoprotein LolB (207 aa).

Residues 1-21 (MPMRKRHFYRLLPLASLLLAA) form the signal peptide. C22 is lipidated: N-palmitoyl cysteine. A lipid anchor (S-diacylglycerol cysteine) is attached at C22.

Belongs to the LolB family. As to quaternary structure, monomer.

It localises to the cell outer membrane. Its function is as follows. Plays a critical role in the incorporation of lipoproteins in the outer membrane after they are released by the LolA protein. This is Outer-membrane lipoprotein LolB from Yersinia pseudotuberculosis serotype O:3 (strain YPIII).